Reading from the N-terminus, the 353-residue chain is Photosystem II D2 protein (353 aa).

At Thr2 the chain carries N-acetylthreonine. At Thr2 the chain carries Phosphothreonine. Residues 41-61 traverse the membrane as a helical segment; that stretch reads CAYFALGGWFTGTTFVTSWYT. Residue His118 coordinates chlorophyll a. A helical membrane pass occupies residues 125–141; sequence GFMLRQFEIARSVQLRP. Residues Gln130 and Asn143 each contribute to the pheophytin a site. Residues 153 to 166 form a helical membrane-spanning segment; the sequence is VFVSVFLIYPLGQS. Residue His198 coordinates chlorophyll a. Residues 208-228 traverse the membrane as a helical segment; sequence AALLCAIHGATVENTLFEDGD. A plastoquinone is bound by residues His215 and Phe262. His215 contacts Fe cation. His269 lines the Fe cation pocket. The helical transmembrane segment at 279–295 threads the bilayer; the sequence is GLWMSALGVVGLALNLR.

Belongs to the reaction center PufL/M/PsbA/D family. As to quaternary structure, PSII is composed of 1 copy each of membrane proteins PsbA, PsbB, PsbC, PsbD, PsbE, PsbF, PsbH, PsbI, PsbJ, PsbK, PsbL, PsbM, PsbT, PsbX, PsbY, PsbZ, Psb30/Ycf12, at least 3 peripheral proteins of the oxygen-evolving complex and a large number of cofactors. It forms dimeric complexes. The D1/D2 heterodimer binds P680, chlorophylls that are the primary electron donor of PSII, and subsequent electron acceptors. It shares a non-heme iron and each subunit binds pheophytin, quinone, additional chlorophylls, carotenoids and lipids. There is also a Cl(-1) ion associated with D1 and D2, which is required for oxygen evolution. The PSII complex binds additional chlorophylls, carotenoids and specific lipids. is required as a cofactor.

Its subcellular location is the plastid. The protein localises to the chloroplast thylakoid membrane. The catalysed reaction is 2 a plastoquinone + 4 hnu + 2 H2O = 2 a plastoquinol + O2. In terms of biological role, photosystem II (PSII) is a light-driven water:plastoquinone oxidoreductase that uses light energy to abstract electrons from H(2)O, generating O(2) and a proton gradient subsequently used for ATP formation. It consists of a core antenna complex that captures photons, and an electron transfer chain that converts photonic excitation into a charge separation. The D1/D2 (PsbA/PsbD) reaction center heterodimer binds P680, the primary electron donor of PSII as well as several subsequent electron acceptors. D2 is needed for assembly of a stable PSII complex. This Oenothera argillicola (Appalachian evening primrose) protein is Photosystem II D2 protein.